We begin with the raw amino-acid sequence, 376 residues long: uncharacterized protein (376 aa).

2 stretches are compositionally biased toward low complexity: residues N73–N99 and S228–S243. 2 disordered regions span residues N73–L100 and E222–D269.

This is an uncharacterized protein from Saccharomyces cerevisiae (strain ATCC 204508 / S288c) (Baker's yeast).